A 416-amino-acid chain; its full sequence is Lysosome-associated membrane glycoprotein 3 (416 aa).

Positions 1 to 27 are cleaved as a signal peptide; the sequence is MPRQLSAAAVLFASLAVILHDGSQMRA. Residues 28-381 lie on the Lumenal side of the membrane; it reads KAFPKTRDYS…NVDECSSDYT (354 aa). The disordered stretch occupies residues 135–217; that stretch reads PPTITPPAHT…ASTVPGSTLA (83 aa). Polar residues predominate over residues 142–170; that stretch reads AHTTGTSSSTVNHTTGNATQPSNQTTLPA. Positions 188 to 208 are enriched in low complexity; that stretch reads PTHAPGTTAAAHNTTRTAAPA. N-linked (GlcNAc...) asparagine glycosylation occurs at N200. A disulfide bond links C237 and C274. The N-linked (GlcNAc...) asparagine glycan is linked to N291. C339 and C376 are disulfide-bonded. A helical transmembrane segment spans residues 382 to 402; it reads IVLPVIGAIVVGLCLVGMGVY. Residues 403-416 lie on the Cytoplasmic side of the membrane; sequence KIRLRCQSSGYQRI.

This sequence belongs to the LAMP family. Monomer. Interacts with FURIN.

It localises to the cell surface. The protein resides in the lysosome membrane. The protein localises to the cytoplasmic vesicle membrane. Its subcellular location is the early endosome membrane. Its function is as follows. Lysosomal membrane glycoprotein which plays a role in the unfolded protein response (UPR) that contributes to protein degradation and cell survival during proteasomal dysfunction. Plays a role in the process of fusion of the lysosome with the autophagosome, thereby modulating the autophagic process. Promotes hepatocellular lipogenesis through activation of the PI3K/Akt pathway. May also play a role in dendritic cell function and in adaptive immunity. This chain is Lysosome-associated membrane glycoprotein 3 (LAMP3), found in Macaca mulatta (Rhesus macaque).